The primary structure comprises 368 residues: Protein HGH1 homolog (368 aa).

Belongs to the HGH1 family.

The protein is Protein HGH1 homolog of Drosophila pseudoobscura pseudoobscura (Fruit fly).